A 500-amino-acid polypeptide reads, in one-letter code: Protein gar2 (500 aa).

Composition is skewed to basic and acidic residues over residues 1 to 41 and 59 to 68; these read MAKK…KEIA and KRASSPEPSK. A disordered region spans residues 1-262; it reads MAKKDKTSVK…TKPSQDSNET (262 aa). Positions 69-78 are enriched in basic residues; sequence KSVKKQKKSK. Low complexity predominate over residues 90–120; the sequence is ESSSSESESSSSESESSSSESESSSSESSSS. Residues 126–137 are compositionally biased toward basic and acidic residues; that stretch reads VIVKTEEKKESS. Phosphoserine is present on residues S143, S144, and S146. Over residues 152–163 the composition is skewed to basic and acidic residues; the sequence is AVVKIEEKKESS. Residues 164–182 are compositionally biased toward low complexity; that stretch reads SDSSSESSSSESESESSSS. Residues 191–201 show a composition bias toward basic and acidic residues; the sequence is VEKTEEKKEGS. Residues 202-218 show a composition bias toward low complexity; it reads SESSSDSESSSDSSSES. A compositionally biased stretch (acidic residues) spans 219–233; the sequence is GDSDSSSDSESESSS. A compositionally biased stretch (basic and acidic residues) spans 234–250; sequence EDEKKRKAEPASEERPA. RRM domains lie at 263 to 341 and 366 to 443; these read CTVF…LSNP and DTVF…FSTP. A disordered region spans residues 441–500; the sequence is STPRTGGGSRGGRGGFGGRGGFGGRGGFGGGRGRGRGGARSGNPNRGSVAPFSGNKVTFD. The span at 445-480 shows a compositional bias: gly residues; it reads TGGGSRGGRGGFGGRGGFGGRGGFGGGRGRGRGGAR.

The protein belongs to the RRM GAR family.

The protein localises to the nucleus. It is found in the nucleolus. Functionally, helps the assembly of pre-ribosomal particles containing 18S rRNA. The sequence is that of Protein gar2 (gar2) from Schizosaccharomyces pombe (strain 972 / ATCC 24843) (Fission yeast).